The primary structure comprises 240 residues: Spore coat polysaccharide biosynthesis protein SpsF (240 aa).

It belongs to the CMP-NeuNAc synthase family.

It functions in the pathway spore coat biogenesis; spore coat polysaccharide biosynthesis. This Bacillus subtilis (strain 168) protein is Spore coat polysaccharide biosynthesis protein SpsF (spsF).